Reading from the N-terminus, the 440-residue chain is tRNA-2-methylthio-N(6)-dimethylallyladenosine synthase (440 aa).

Residues 7-123 (NTFYIHTFGC…LPQLIEQARS (117 aa)) enclose the MTTase N-terminal domain. [4Fe-4S] cluster-binding residues include cysteine 16, cysteine 52, cysteine 86, cysteine 159, cysteine 163, and cysteine 166. Residues 145-375 (RQGSISAFVP…IDLQNTISGE (231 aa)) form the Radical SAM core domain. Positions 378–440 (QQAIGSVVEV…TSATLTGRPV (63 aa)) constitute a TRAM domain.

Belongs to the methylthiotransferase family. MiaB subfamily. Monomer. The cofactor is [4Fe-4S] cluster.

The protein resides in the cytoplasm. It carries out the reaction N(6)-dimethylallyladenosine(37) in tRNA + (sulfur carrier)-SH + AH2 + 2 S-adenosyl-L-methionine = 2-methylsulfanyl-N(6)-dimethylallyladenosine(37) in tRNA + (sulfur carrier)-H + 5'-deoxyadenosine + L-methionine + A + S-adenosyl-L-homocysteine + 2 H(+). Catalyzes the methylthiolation of N6-(dimethylallyl)adenosine (i(6)A), leading to the formation of 2-methylthio-N6-(dimethylallyl)adenosine (ms(2)i(6)A) at position 37 in tRNAs that read codons beginning with uridine. The protein is tRNA-2-methylthio-N(6)-dimethylallyladenosine synthase of Pelodictyon phaeoclathratiforme (strain DSM 5477 / BU-1).